Here is a 629-residue protein sequence, read N- to C-terminus: DNA-directed RNA polymerase subunit beta' (629 aa).

Positions 70, 72, 85, and 88 each coordinate Zn(2+). Positions 472, 474, and 476 each coordinate Mg(2+).

This sequence belongs to the RNA polymerase beta' chain family. RpoC1 subfamily. In terms of assembly, in plastids the minimal PEP RNA polymerase catalytic core is composed of four subunits: alpha, beta, beta', and beta''. When a (nuclear-encoded) sigma factor is associated with the core the holoenzyme is formed, which can initiate transcription. Mg(2+) is required as a cofactor. It depends on Zn(2+) as a cofactor.

It localises to the plastid. It is found in the chloroplast. The enzyme catalyses RNA(n) + a ribonucleoside 5'-triphosphate = RNA(n+1) + diphosphate. Functionally, DNA-dependent RNA polymerase catalyzes the transcription of DNA into RNA using the four ribonucleoside triphosphates as substrates. This chain is DNA-directed RNA polymerase subunit beta', found in Porphyra purpurea (Red seaweed).